A 429-amino-acid chain; its full sequence is ETS domain-containing protein Elk-1 (429 aa).

Residues 5–86 (VTLWQFLLQL…SGQKFVYKFV (82 aa)) constitute a DNA-binding region (ETS). 3 disordered regions span residues 119-146 (HAGP…GLAR), 165-204 (SLQP…SPNP), and 227-253 (APNQ…KVEG). Positions 169–178 (QPQPPIPPRP) are enriched in pro residues. Residues Lys231, Lys250, and Lys255 each participate in a glycyl lysine isopeptide (Lys-Gly) (interchain with G-Cter in SUMO) cross-link. Positions 302 to 312 (STSTTEITQPQ) are enriched in polar residues. Positions 302 to 354 (STSTTEITQPQKGRKPRDLELPLSPSLLGGQGPERTPGSGTSSGLQAPGPALT) are disordered. At Ser325 the chain carries Phosphoserine; by MAPK1. A phosphothreonine; by MAPK1 mark is found at Thr337, Thr354, Thr364, and Thr369. Residues 350 to 400 (GPALTPSLLPTHTLTPVLLTPSSLPPSIHFWSTLSPIAPRSPAKLSFQFPS) form a sufficient for interaction with MAD2L2 region. The O-linked (GlcNAc) threonine glycan is linked to Thr382. Residue Ser384 is modified to Phosphoserine; by MAPK1 and MAPK8. Position 390 is a phosphoserine; by MAPK1 (Ser390). Thr418 carries the post-translational modification Phosphothreonine; by MAPK1. Position 423 is a phosphoserine; by MAPK1 (Ser423).

Belongs to the ETS family. In terms of assembly, interacts in its sumoylated form with PIAS2/PIASX which enhances its transcriptional activator activity. Interacts with MAD2L2; the interaction is direct and promotes phosphorylation by the kinases MAPK8 and/or MAPK9. Interacts with POU1F1. Post-translationally, sumoylation represses transcriptional activator activity as it results in recruitment of HDAC2 to target gene promoters which leads to decreased histone acetylation and reduced transactivator activity. It also regulates nuclear retention. On mitogenic stimulation, phosphorylated on C-terminal serine and threonine residues by MAPK1 but also MAPK8 and/or MAPK9. Phosphorylation leads to loss of sumoylation and restores transcriptional activator activity. Phosphorylated and activated by CaMK4, MAPK11, MAPK12 and MAPK14. Upon bFGF stimulus, phosphorylated by PAK1. Phosphorylated by PRP4K at Thr-418; phosphorylation activation ELK1 transcriptional activity. In terms of tissue distribution, predominantly expressed in the brain, and to a lesser extent in the heart, liver and muscle.

It localises to the nucleus. Transcription factor that binds to purine-rich DNA sequences. Forms a ternary complex with SRF and the ETS and SRF motifs of the serum response element (SRE) on the promoter region of immediate early genes such as FOS and IER2. Induces target gene transcription upon JNK and MAPK-signaling pathways stimulation. This chain is ETS domain-containing protein Elk-1, found in Mus musculus (Mouse).